The sequence spans 615 residues: MTIKILPPQLANQIAAGEVVERPASVVKELIENSLDAGATHIQIEIENGGANLIRIRDNGIGIAKDELHLALARHATSKIASLDDLEMILSLGFRGEALASISSVSRLTLTSRTAQQNEAWQVYAQGRDMETSITPASHPIGTTVEVANLFFNTPARRKFLRTDKTEFAHIDEVIRRIALAKPQVAFTLTHNNKLIHRYKSAVTNEQKIKRIATICGNDFMQNALHIDWKHNDLHLSGWVIQPQFARHQNDLNYCYINGRMVKDKVITHAIRQAYSEYLSNEKYPAFVLFIDLNPNEVDVNVHPTKHEVRFHQARLIHDFIYQGMTNALTSEQTNIPIQSEQSNPTKVAEPQGIWNLTTHNKGNRATAGKNIFAQQPKDYDKKSSQFKPHFAANYSEVTPKKAVQKAYAELLATHEEKTIASSTLPHQFTHNATHISEQKNVLHALALIENKALLLQQNQQYFLLSIQALQHFNIRLQLQQSNIAQQTLLIPILLRLNKQQYQSWQQQALFFQQSGFDFTDNSAQRRITLNRLPICLRTQNIQKIILQLLDQPHEKYTIFLTALCSHLEFPSLSTFSEAVNLLTKTEQQFSTQHQLEFQSLLVKIEWDHYLDKLQ.

It belongs to the DNA mismatch repair MutL/HexB family.

Functionally, this protein is involved in the repair of mismatches in DNA. It is required for dam-dependent methyl-directed DNA mismatch repair. May act as a 'molecular matchmaker', a protein that promotes the formation of a stable complex between two or more DNA-binding proteins in an ATP-dependent manner without itself being part of a final effector complex. In Histophilus somni (strain 2336) (Haemophilus somnus), this protein is DNA mismatch repair protein MutL.